Consider the following 660-residue polypeptide: tRNA 5-methylaminomethyl-2-thiouridine biosynthesis bifunctional protein MnmC (660 aa).

Residues 1-242 (MTDRIVPATL…KRAMLVGEFA (242 aa)) form a tRNA (mnm(5)s(2)U34)-methyltransferase region. The tract at residues 266–660 (IGAGLAGCAV…VRALRHGRVA (395 aa)) is FAD-dependent cmnm(5)s(2)U34 oxidoreductase.

This sequence in the N-terminal section; belongs to the methyltransferase superfamily. tRNA (mnm(5)s(2)U34)-methyltransferase family. It in the C-terminal section; belongs to the DAO family. FAD serves as cofactor.

The protein localises to the cytoplasm. The enzyme catalyses 5-aminomethyl-2-thiouridine(34) in tRNA + S-adenosyl-L-methionine = 5-methylaminomethyl-2-thiouridine(34) in tRNA + S-adenosyl-L-homocysteine + H(+). Catalyzes the last two steps in the biosynthesis of 5-methylaminomethyl-2-thiouridine (mnm(5)s(2)U) at the wobble position (U34) in tRNA. Catalyzes the FAD-dependent demodification of cmnm(5)s(2)U34 to nm(5)s(2)U34, followed by the transfer of a methyl group from S-adenosyl-L-methionine to nm(5)s(2)U34, to form mnm(5)s(2)U34. This Burkholderia pseudomallei (strain K96243) protein is tRNA 5-methylaminomethyl-2-thiouridine biosynthesis bifunctional protein MnmC.